A 371-amino-acid polypeptide reads, in one-letter code: MSAQAQMRALLDQLMGTARDGDETRQRVKFTDDRVCKSHLLDCCPHDILAGTRMDLGECTKIHDLALRADYEIASKERDLFFELDAMDHLESFIAECDRRTELAKKRLAETQEEISAEVSAKAEKVHELNEEIGKLLAKAEQLGAEGNVDESQKILMEVEKVRAKKKEAEEEYRNSMPASSFQQQKLRVCEVCSAYLGLHDNDRRLADHFGGKLHLGFIQIREKLDQLRKTVAEKQEKRNQDRLRRREEREREERLGRRSGSRTRDRRRSRSRDRRRRRSRSTSRERRKFSRSRSRDRYRRHRSRSRSHSRGHRRASRDRSTKYKFSRERSLREESWEYGRNERGPTDWRLENSNGKTASRRSEEKEAGEI.

2 coiled-coil regions span residues 87 to 177 (MDHL…RNSM) and 220 to 256 (QIRE…EERL). The span at 232 to 257 (VAEKQEKRNQDRLRRREEREREERLG) shows a compositional bias: basic and acidic residues. The interval 232–371 (VAEKQEKRNQ…RSEEKEAGEI (140 aa)) is disordered. Residues 258 to 317 (RRSGSRTRDRRRSRSRDRRRRRSRSTSRERRKFSRSRSRDRYRRHRSRSRSHSRGHRRAS) are compositionally biased toward basic residues. Basic and acidic residues-rich tracts occupy residues 318–351 (RDRS…DWRL) and 361–371 (RRSEEKEAGEI). Phosphoserine occurs at positions 336 and 363.

Belongs to the Luc7 family.

In terms of biological role, may bind to RNA via its Arg/Ser-rich domain. In Mus musculus (Mouse), this protein is Putative RNA-binding protein Luc7-like 1 (Luc7l).